The primary structure comprises 353 residues: Nuclear hormone receptor family member nhr-27 (353 aa).

The nuclear receptor DNA-binding region spans 24 to 102 (VSNCVVCGRL…KGMLDLSRYT (79 aa)). NR C4-type zinc fingers lie at residues 27 to 47 (CVVCGRLTSLFNYGAHSCSAC) and 64 to 85 (CKYSGNCFENFKRAIHFECKFC). The region spanning 119 to 351 (ETLFLTMTVS…SQVHQDVIEF (233 aa)) is the NR LBD domain. Residues 340 to 351 (QPSQVHQDVIEF) are AF-2.

The protein belongs to the nuclear hormone receptor family.

The protein localises to the nucleus. Its function is as follows. Ligand-activated transcription factor. Involved in lifespan extension in a manner dependent upon mitochondrial function. This chain is Nuclear hormone receptor family member nhr-27, found in Caenorhabditis elegans.